A 94-amino-acid chain; its full sequence is DNA-binding protein HU (94 aa).

A disordered region spans residues 56 to 94 (QKGKEGKVPGSDKTYKTEDKRVPKFKPGKTLKQKVEEGK). Basic and acidic residues predominate over residues 68–77 (KTYKTEDKRV). Residues 78 to 87 (PKFKPGKTLK) are compositionally biased toward basic residues.

The protein belongs to the bacterial histone-like protein family. In terms of assembly, homodimer.

In terms of biological role, histone-like DNA-binding protein which is capable of wrapping DNA to stabilize it, and thus to prevent its denaturation under extreme environmental conditions. The protein is DNA-binding protein HU (hup) of Helicobacter pylori (strain ATCC 700392 / 26695) (Campylobacter pylori).